A 733-amino-acid chain; its full sequence is Hexamerin (733 aa).

The first 17 residues, 1–17 (MKTALVLILATATLAVA), serve as a signal peptide directing secretion. Residues N199, N234, and N431 are each glycosylated (N-linked (GlcNAc...) asparagine).

The protein belongs to the hemocyanin family. As to quaternary structure, homohexamer.

Its subcellular location is the secreted. The protein resides in the extracellular space. In terms of biological role, larval storage protein (LSP) which may serve as a store of amino acids for synthesis of adult proteins. This is Hexamerin from Blaberus discoidalis (Tropical cockroach).